The chain runs to 416 residues: POC1 centriolar protein homolog A (416 aa).

WD repeat units lie at residues 16-55 (GHRDAITSLDFSPSGKQIASGSVDASVMVWNMKPQSRAYR), 58-97 (GHKDAVTCVQFSPSAHLLASSSRDKTVRLWVPSVKGESVL), 100-139 (AHTGSVRSVCFSADGQSLLTASDDQSIKLWSVHRQKIICT), 142-181 (EHNNWVRCARFSPDGQLMVSVSDDRTVKLWDASSRQLIHT), 184-223 (EPGGYSSYVDFHPSSTCIATASSDNTVRVWDIRTHTLLQH), 226-265 (VHSAAVNALSFHPSGNHLLTASSDSTLKILDLLEGRLLYT), and 268-307 (GHQGSASCVSFSRSGDQFASAGSDQQVMVWRTNFDSVDYS). Positions 311-340 (QQKRDHRTPSAQASGAAGDPESRSGQKTEV) are disordered. A coiled-coil region spans residues 380–412 (QLDVLTQTVAILEQRLTLTEDKLKECLEQQHQA).

This sequence belongs to the WD repeat POC1 family.

Its function is as follows. May play an important role in centriole assembly and/or stability and ciliogenesis. The sequence is that of POC1 centriolar protein homolog A from Danio rerio (Zebrafish).